Here is an 806-residue protein sequence, read N- to C-terminus: Leucine--tRNA ligase (806 aa).

Positions 40–51 (PYPSGSGLHVGH) match the 'HIGH' region motif. The 'KMSKS' region signature appears at 576-580 (KMSKS). Residue Lys-579 coordinates ATP.

This sequence belongs to the class-I aminoacyl-tRNA synthetase family.

It is found in the cytoplasm. It catalyses the reaction tRNA(Leu) + L-leucine + ATP = L-leucyl-tRNA(Leu) + AMP + diphosphate. The polypeptide is Leucine--tRNA ligase (Chlorobium phaeobacteroides (strain BS1)).